The following is a 139-amino-acid chain: D-ribose pyranase (139 aa).

Histidine 20 acts as the Proton donor in catalysis. Substrate contacts are provided by residues aspartate 28, histidine 106, and 128 to 130 (YAN).

The protein belongs to the RbsD / FucU family. RbsD subfamily. In terms of assembly, homodecamer.

Its subcellular location is the cytoplasm. The catalysed reaction is beta-D-ribopyranose = beta-D-ribofuranose. Its pathway is carbohydrate metabolism; D-ribose degradation; D-ribose 5-phosphate from beta-D-ribopyranose: step 1/2. Functionally, catalyzes the interconversion of beta-pyran and beta-furan forms of D-ribose. This Pectobacterium carotovorum subsp. carotovorum (strain PC1) protein is D-ribose pyranase.